Consider the following 49-residue polypeptide: U1-theraphotoxin-Lp1b (49 aa).

4 disulfide bridges follow: Cys-4-Cys-17, Cys-8-Cys-41, Cys-22-Cys-24, and Cys-35-Cys-46.

As to expression, expressed by the venom gland.

Its subcellular location is the secreted. Functionally, toxin that causes irreversible contractile paralysis into adult Aedes aegypti resulting in 100% mortality after 24 hours. In Lasiodora parahybana (Brazilian salmon pink birdeater), this protein is U1-theraphotoxin-Lp1b.